A 283-amino-acid chain; its full sequence is Thymidylate synthase (283 aa).

Arg-22 serves as a coordination point for dUMP. Residue Cys-160 is the Nucleophile of the active site. DUMP-binding positions include 180–183, Asn-191, and 221–223; these read RSCD and HIY. Asp-183 contributes to the (6R)-5,10-methylene-5,6,7,8-tetrahydrofolate binding site. Ser-282 contributes to the (6R)-5,10-methylene-5,6,7,8-tetrahydrofolate binding site.

Belongs to the thymidylate synthase family. Bacterial-type ThyA subfamily. Homodimer.

The protein resides in the cytoplasm. The enzyme catalyses dUMP + (6R)-5,10-methylene-5,6,7,8-tetrahydrofolate = 7,8-dihydrofolate + dTMP. It functions in the pathway pyrimidine metabolism; dTTP biosynthesis. Catalyzes the reductive methylation of 2'-deoxyuridine-5'-monophosphate (dUMP) to 2'-deoxythymidine-5'-monophosphate (dTMP) while utilizing 5,10-methylenetetrahydrofolate (mTHF) as the methyl donor and reductant in the reaction, yielding dihydrofolate (DHF) as a by-product. This enzymatic reaction provides an intracellular de novo source of dTMP, an essential precursor for DNA biosynthesis. This Vibrio atlanticus (strain LGP32) (Vibrio splendidus (strain Mel32)) protein is Thymidylate synthase.